A 103-amino-acid chain; its full sequence is Large ribosomal subunit protein bL21 (103 aa).

The protein belongs to the bacterial ribosomal protein bL21 family. Part of the 50S ribosomal subunit. Contacts protein L20.

Its function is as follows. This protein binds to 23S rRNA in the presence of protein L20. This Lactobacillus delbrueckii subsp. bulgaricus (strain ATCC 11842 / DSM 20081 / BCRC 10696 / JCM 1002 / NBRC 13953 / NCIMB 11778 / NCTC 12712 / WDCM 00102 / Lb 14) protein is Large ribosomal subunit protein bL21.